The following is a 330-amino-acid chain: L-asparaginase (330 aa).

One can recognise an Asparaginase/glutaminase domain in the interval 4-330; that stretch reads PQVTILATGG…EAIQKIFSTY (327 aa). Thr-14 functions as the O-isoaspartyl threonine intermediate in the catalytic mechanism. Residue 93–94 participates in substrate binding; it reads TD.

The protein belongs to the asparaginase 1 family. In terms of assembly, homotetramer.

Its subcellular location is the cytoplasm. The enzyme catalyses L-asparagine + H2O = L-aspartate + NH4(+). This Wolinella succinogenes (strain ATCC 29543 / DSM 1740 / CCUG 13145 / JCM 31913 / LMG 7466 / NCTC 11488 / FDC 602W) (Vibrio succinogenes) protein is L-asparaginase (ansA).